Reading from the N-terminus, the 361-residue chain is Histidinol-phosphate aminotransferase (361 aa).

At lysine 220 the chain carries N6-(pyridoxal phosphate)lysine.

It belongs to the class-II pyridoxal-phosphate-dependent aminotransferase family. Histidinol-phosphate aminotransferase subfamily. Homodimer. The cofactor is pyridoxal 5'-phosphate.

The enzyme catalyses L-histidinol phosphate + 2-oxoglutarate = 3-(imidazol-4-yl)-2-oxopropyl phosphate + L-glutamate. It functions in the pathway amino-acid biosynthesis; L-histidine biosynthesis; L-histidine from 5-phospho-alpha-D-ribose 1-diphosphate: step 7/9. In Syntrophus aciditrophicus (strain SB), this protein is Histidinol-phosphate aminotransferase.